The primary structure comprises 546 residues: Tegument protein UL21 homolog (546 aa).

It belongs to the alphaherpesvirinae HHV-1 UL21 protein family.

It localises to the virion tegument. Its subcellular location is the host cytoplasm. It is found in the host nucleus. May facilitate the viral transport through neural circuits. This chain is Tegument protein UL21 homolog (MDV033), found in Gallus gallus (Chicken).